A 382-amino-acid chain; its full sequence is Pyrimidine monooxygenase RutA (382 aa).

FMN is bound by residues 68–69, Asn134, Glu143, 159–160, and Ser209; these read IK and RY.

The protein belongs to the NtaA/SnaA/DszA monooxygenase family. RutA subfamily.

It catalyses the reaction uracil + FMNH2 + NADH + O2 = (Z)-3-ureidoacrylate + FMN + NAD(+) + H2O + H(+). It carries out the reaction thymine + FMNH2 + NADH + O2 = (Z)-2-methylureidoacrylate + FMN + NAD(+) + H2O + H(+). Its function is as follows. Catalyzes the pyrimidine ring opening between N-3 and C-4 by an unusual flavin hydroperoxide-catalyzed mechanism, adding oxygen atoms in the process to yield ureidoacrylate peracid, that immediately reacts with FMN forming ureidoacrylate and FMN-N(5)-oxide. The FMN-N(5)-oxide reacts spontaneously with NADH to produce FMN. Requires the flavin reductase RutF to regenerate FMN in vivo. The chain is Pyrimidine monooxygenase RutA from Escherichia coli O45:K1 (strain S88 / ExPEC).